The primary structure comprises 211 residues: LexA repressor (211 aa).

A DNA-binding region (H-T-H motif) is located at residues 29–49 (VREICTAVGLRSTSTVHSHLN). Active-site for autocatalytic cleavage activity residues include S131 and K169.

The protein belongs to the peptidase S24 family. As to quaternary structure, homodimer.

The enzyme catalyses Hydrolysis of Ala-|-Gly bond in repressor LexA.. In terms of biological role, represses a number of genes involved in the response to DNA damage (SOS response), including recA and lexA. In the presence of single-stranded DNA, RecA interacts with LexA causing an autocatalytic cleavage which disrupts the DNA-binding part of LexA, leading to derepression of the SOS regulon and eventually DNA repair. The chain is LexA repressor from Clostridioides difficile (strain 630) (Peptoclostridium difficile).